Here is a 458-residue protein sequence, read N- to C-terminus: Mannan endo-1,6-alpha-mannosidase DFG5 (458 aa).

The signal sequence occupies residues 1 to 26 (MIVNISAKMILSICFTFLSFFKATHA). N-linked (GlcNAc...) asparagine glycans are attached at residues Asn-89, Asn-114, Asn-138, Asn-208, Asn-231, Asn-245, Asn-270, Asn-273, and Asn-417. Residues 399–418 (PYKEDNGGTSKGDANAGMNS) are disordered. Gly-437 carries the GPI-anchor amidated glycine lipid modification. Positions 438 to 458 (AAIITAVILSVLTGGAVWMLF) are cleaved as a propeptide — removed in mature form.

It belongs to the glycosyl hydrolase 76 family. Post-translationally, N-glycosylated.

It localises to the cell membrane. It carries out the reaction Random hydrolysis of (1-&gt;6)-alpha-D-mannosidic linkages in unbranched (1-&gt;6)-mannans.. Functionally, required for normal synthesis of the cell wall. The polypeptide is Mannan endo-1,6-alpha-mannosidase DFG5 (DFG5) (Saccharomyces cerevisiae (strain ATCC 204508 / S288c) (Baker's yeast)).